Consider the following 97-residue polypeptide: YcgL domain-containing protein PputGB1_4120 (97 aa).

Residues 3–87 enclose the YcgL domain; sequence RICSIYKSPR…AEDEYIEHLP (85 aa).

The polypeptide is YcgL domain-containing protein PputGB1_4120 (Pseudomonas putida (strain GB-1)).